The primary structure comprises 642 residues: Threonine--tRNA ligase (642 aa).

A TGS domain is found at Met1–Thr61. The interval Asp244 to Pro535 is catalytic. Cys335, His386, and His512 together coordinate Zn(2+).

It belongs to the class-II aminoacyl-tRNA synthetase family. As to quaternary structure, homodimer. Zn(2+) is required as a cofactor.

Its subcellular location is the cytoplasm. It carries out the reaction tRNA(Thr) + L-threonine + ATP = L-threonyl-tRNA(Thr) + AMP + diphosphate + H(+). Catalyzes the attachment of threonine to tRNA(Thr) in a two-step reaction: L-threonine is first activated by ATP to form Thr-AMP and then transferred to the acceptor end of tRNA(Thr). Also edits incorrectly charged L-seryl-tRNA(Thr). The polypeptide is Threonine--tRNA ligase (Vibrio cholerae serotype O1 (strain M66-2)).